The primary structure comprises 310 residues: Methionyl-tRNA formyltransferase (310 aa).

Position 109–112 (S109–P112) interacts with (6S)-5,6,7,8-tetrahydrofolate.

This sequence belongs to the Fmt family.

It carries out the reaction L-methionyl-tRNA(fMet) + (6R)-10-formyltetrahydrofolate = N-formyl-L-methionyl-tRNA(fMet) + (6S)-5,6,7,8-tetrahydrofolate + H(+). Functionally, attaches a formyl group to the free amino group of methionyl-tRNA(fMet). The formyl group appears to play a dual role in the initiator identity of N-formylmethionyl-tRNA by promoting its recognition by IF2 and preventing the misappropriation of this tRNA by the elongation apparatus. The polypeptide is Methionyl-tRNA formyltransferase (Agathobacter rectalis (strain ATCC 33656 / DSM 3377 / JCM 17463 / KCTC 5835 / VPI 0990) (Eubacterium rectale)).